Consider the following 758-residue polypeptide: MTIVTNLGFPRIGARRELKRALESHWRGETDATQLQHTARELRARHWRLQRDAGVDLPPSNDFSLYDHVLDTAFLFDAIPQRYHGLVDADPLAGYFAMARGRQADNIDLHALEMTKWFDTNYHYLVPELHRDQHFALRGNKPIAEFEEALALGITTRPVLLGPVSFLLLSKTVDGSNRLDLLERLLPVYTQLLRQLQESGAEWVQIDEPTLVLDLDAQTQQAFRKAYATLNQGPRPKLLLTSYFGPLGDNLELALQLPADGLHIDLVRGTEQLDAVLNTLPAGRVLSAGLVNGRNIWRTALDNALTLARYAQGRVDKDHLWLAPSCSLLHVPVDLEQEKNLDADVRNWLAFAKQKLSELRVLADALDNKPEAETALTQTRQALEARRQSPKVHRPDVAQRLAALTPDTTRRNTAYPQRSQAQQHTLNLPAYPTTTIGSFPQTLEVREARAQFKSGKLSESDYEAFLKAETERCVRTQEEIGLDVLVHGEFERNDMVEYFGEQLDGFIFTKLGWVQSYGSRCVKPPIIYGDVVRPAPMTVTWSAYAQSLTDKPMKGMLTGPVTMLQWSFVRDDQERAQTCRQIALALRDEVQDLEKAGIKVIQIDEPAIREGLPLRRGEWADYLNWAVESFRIASSNVHDTTQIHTHMCYSEFNDIIEAVAALDADVISIETSRSRMELLDAFVKFRYPNAIGPGVYDIHSPRVPQEEEMVLLLKKARAVLPPEQLWVNPDCGLKTRGWKETRAALQTMVHAAQRLRAE.

Residues 16–19 (RELK) and K116 contribute to the 5-methyltetrahydropteroyltri-L-glutamate site. Residues 436–438 (IGS) and E489 contribute to the L-homocysteine site. L-methionine contacts are provided by residues 436 to 438 (IGS) and E489. Residues 520-521 (RC) and W566 contribute to the 5-methyltetrahydropteroyltri-L-glutamate site. Residue D604 coordinates L-homocysteine. Residue D604 coordinates L-methionine. E610 contributes to the 5-methyltetrahydropteroyltri-L-glutamate binding site. Zn(2+) is bound by residues H646, C648, and E670. H699 functions as the Proton donor in the catalytic mechanism. C731 lines the Zn(2+) pocket.

The protein belongs to the vitamin-B12 independent methionine synthase family. The cofactor is Zn(2+).

It catalyses the reaction 5-methyltetrahydropteroyltri-L-glutamate + L-homocysteine = tetrahydropteroyltri-L-glutamate + L-methionine. It participates in amino-acid biosynthesis; L-methionine biosynthesis via de novo pathway; L-methionine from L-homocysteine (MetE route): step 1/1. In terms of biological role, catalyzes the transfer of a methyl group from 5-methyltetrahydrofolate to homocysteine resulting in methionine formation. The sequence is that of 5-methyltetrahydropteroyltriglutamate--homocysteine methyltransferase from Xylella fastidiosa (strain M12).